The primary structure comprises 158 residues: Superoxide dismutase [Cu-Zn] (158 aa).

Residues H46, H48, and H63 each contribute to the Cu cation site. C57 and C149 are disulfide-bonded. The Zn(2+) site is built by H63, H71, H80, and D83. Cu cation is bound at residue H120.

This sequence belongs to the Cu-Zn superoxide dismutase family. In terms of assembly, homodimer. It depends on Cu cation as a cofactor. Zn(2+) is required as a cofactor.

The protein localises to the cytoplasm. The catalysed reaction is 2 superoxide + 2 H(+) = H2O2 + O2. Its function is as follows. Destroys radicals which are normally produced within the cells and which are toxic to biological systems. This chain is Superoxide dismutase [Cu-Zn] (SODC), found in Brugia pahangi (Filarial nematode worm).